The chain runs to 189 residues: ATP-dependent protease subunit HslV (189 aa).

Thr12 is an active-site residue. Ala172, Cys175, and Thr178 together coordinate Na(+).

Belongs to the peptidase T1B family. HslV subfamily. As to quaternary structure, a double ring-shaped homohexamer of HslV is capped on each side by a ring-shaped HslU homohexamer. The assembly of the HslU/HslV complex is dependent on binding of ATP.

It localises to the cytoplasm. It catalyses the reaction ATP-dependent cleavage of peptide bonds with broad specificity.. Its activity is regulated as follows. Allosterically activated by HslU binding. In terms of biological role, protease subunit of a proteasome-like degradation complex believed to be a general protein degrading machinery. This chain is ATP-dependent protease subunit HslV, found in Ehrlichia ruminantium (strain Welgevonden).